The following is a 385-amino-acid chain: S-adenosylmethionine synthase (385 aa).

His-16 contacts ATP. A Mg(2+)-binding site is contributed by Asp-18. Glu-44 provides a ligand contact to K(+). Residues Glu-57 and Gln-100 each coordinate L-methionine. The tract at residues 100-110 (QSPDINQGVDR) is flexible loop. Residues 164–166 (DGK), 230–231 (KF), Asp-239, 245–246 (RK), Ala-262, and Lys-266 contribute to the ATP site. Asp-239 provides a ligand contact to L-methionine. L-methionine is bound at residue Lys-270.

Belongs to the AdoMet synthase family. In terms of assembly, homotetramer; dimer of dimers. Mg(2+) serves as cofactor. It depends on K(+) as a cofactor.

Its subcellular location is the cytoplasm. The enzyme catalyses L-methionine + ATP + H2O = S-adenosyl-L-methionine + phosphate + diphosphate. Its pathway is amino-acid biosynthesis; S-adenosyl-L-methionine biosynthesis; S-adenosyl-L-methionine from L-methionine: step 1/1. Its function is as follows. Catalyzes the formation of S-adenosylmethionine (AdoMet) from methionine and ATP. The overall synthetic reaction is composed of two sequential steps, AdoMet formation and the subsequent tripolyphosphate hydrolysis which occurs prior to release of AdoMet from the enzyme. The protein is S-adenosylmethionine synthase of Helicobacter pylori (strain Shi470).